Reading from the N-terminus, the 306-residue chain is Serine/threonine-protein phosphatase PP2A-1 catalytic subunit (306 aa).

Positions 54, 56, 82, and 114 each coordinate Mn(2+). The active-site Proton donor is His-115. Mn(2+)-binding residues include His-164 and His-238.

This sequence belongs to the PPP phosphatase family. PP-2A subfamily. The cofactor is Mn(2+).

The protein localises to the cytoplasm. It catalyses the reaction O-phospho-L-seryl-[protein] + H2O = L-seryl-[protein] + phosphate. The enzyme catalyses O-phospho-L-threonyl-[protein] + H2O = L-threonyl-[protein] + phosphate. The sequence is that of Serine/threonine-protein phosphatase PP2A-1 catalytic subunit (PP2A1) from Oryza sativa subsp. indica (Rice).